Reading from the N-terminus, the 154-residue chain is Stigma-specific STIG1-like protein 3 (154 aa).

The N-terminal stretch at 1–23 (MGHRNTVLTILLTISIAIMVLIA) is a signal peptide.

This sequence belongs to the STIG1 family.

The chain is Stigma-specific STIG1-like protein 3 from Arabidopsis thaliana (Mouse-ear cress).